A 180-amino-acid polypeptide reads, in one-letter code: Adenine phosphoribosyltransferase (180 aa).

Ser-2 bears the N-acetylserine mark. 3 positions are modified to phosphoserine: Ser-4, Ser-15, and Ser-30. Tyr-60 is modified (phosphotyrosine). Ser-66 carries the phosphoserine modification. Lys-114 carries the N6-acetyllysine modification. Thr-135 is modified (phosphothreonine).

Belongs to the purine/pyrimidine phosphoribosyltransferase family. As to quaternary structure, homodimer.

The protein localises to the cytoplasm. The enzyme catalyses AMP + diphosphate = 5-phospho-alpha-D-ribose 1-diphosphate + adenine. The protein operates within purine metabolism; AMP biosynthesis via salvage pathway; AMP from adenine: step 1/1. Its function is as follows. Catalyzes a salvage reaction resulting in the formation of AMP, that is energically less costly than de novo synthesis. In Rattus norvegicus (Rat), this protein is Adenine phosphoribosyltransferase.